A 208-amino-acid polypeptide reads, in one-letter code: FMN-dependent NADH:quinone oxidoreductase (208 aa).

Residues 17–19 (SNS), 99–102 (MWNL), and 143–146 (SRGG) each bind FMN.

It belongs to the azoreductase type 1 family. Homodimer. Requires FMN as cofactor.

The enzyme catalyses 2 a quinone + NADH + H(+) = 2 a 1,4-benzosemiquinone + NAD(+). It carries out the reaction N,N-dimethyl-1,4-phenylenediamine + anthranilate + 2 NAD(+) = 2-(4-dimethylaminophenyl)diazenylbenzoate + 2 NADH + 2 H(+). Quinone reductase that provides resistance to thiol-specific stress caused by electrophilic quinones. Its function is as follows. Also exhibits azoreductase activity. Catalyzes the reductive cleavage of the azo bond in aromatic azo compounds to the corresponding amines. The protein is FMN-dependent NADH:quinone oxidoreductase of Staphylococcus aureus (strain MSSA476).